Consider the following 317-residue polypeptide: 1-phosphofructokinase (317 aa).

Residues 223-228 (SMGAEG) and 254-255 (GD) each bind ATP. Asp-255 functions as the Proton acceptor in the catalytic mechanism.

This sequence belongs to the carbohydrate kinase PfkB family.

The enzyme catalyses beta-D-fructose 1-phosphate + ATP = beta-D-fructose 1,6-bisphosphate + ADP + H(+). In terms of biological role, catalyzes the ATP-dependent phosphorylation of fructose-l-phosphate to fructose-l,6-bisphosphate. This chain is 1-phosphofructokinase, found in Vibrio cholerae serotype O1 (strain ATCC 39315 / El Tor Inaba N16961).